A 645-amino-acid polypeptide reads, in one-letter code: Chaperone protein DnaK (645 aa).

Residue T199 is modified to Phosphothreonine; by autocatalysis. Disordered stretches follow at residues 509–530 and 615–645; these read GALSDSDIEQMQKDAEANAEED and EAGADAAGAAGATAGGGDDDDAIDAEFEVKE. Basic and acidic residues predominate over residues 518–530; the sequence is QMQKDAEANAEED. The span at 615-626 shows a compositional bias: low complexity; the sequence is EAGADAAGAAGA. A compositionally biased stretch (acidic residues) spans 631–645; the sequence is GDDDDAIDAEFEVKE.

The protein belongs to the heat shock protein 70 family.

Acts as a chaperone. The sequence is that of Chaperone protein DnaK from Rhodopirellula baltica (strain DSM 10527 / NCIMB 13988 / SH1).